A 92-amino-acid chain; its full sequence is Dolichol-phosphate mannosyltransferase subunit 3 (92 aa).

2 helical membrane passes run 8–28 (LWGL…ALGL) and 37–57 (VLWP…LGTV).

Belongs to the DPM3 family. As to quaternary structure, component of the dolichol-phosphate mannose (DPM) synthase complex composed of DPM1, DPM2 and DPM3; within the complex, associates with DPM1 via its C-terminal domain and with DPM2 via its N-terminal portion. This interaction stabilizes DPM1 protein.

The protein resides in the endoplasmic reticulum membrane. It functions in the pathway protein modification; protein glycosylation. Its function is as follows. Stabilizer subunit of the dolichol-phosphate mannose (DPM) synthase complex; tethers catalytic subunit DPM1 to the endoplasmic reticulum. The polypeptide is Dolichol-phosphate mannosyltransferase subunit 3 (DPM3) (Homo sapiens (Human)).